A 271-amino-acid chain; its full sequence is Catechol O-methyltransferase (271 aa).

The Cytoplasmic portion of the chain corresponds to 1-6; that stretch reads MPEAPP. Residues 7–26 traverse the membrane as a helical; Signal-anchor for type II membrane protein segment; the sequence is LLLAAVLLGLVLLVVLLLLL. Over 27 to 271 the chain is Extracellular; it reads RHWGWGLCLI…YKGPGSEAGP (245 aa). S-adenosyl-L-methionine-binding positions include V92, E114, S122, E140, I141, 167–170, S169, and D191; that span reads GASQ. Mg(2+) is bound at residue D191. K194 is a binding site for substrate. Mg(2+) is bound by residues D219 and N220. Substrate-binding residues include N220 and E249. Phosphoserine is present on S267.

Belongs to the class I-like SAM-binding methyltransferase superfamily. Cation-dependent O-methyltransferase family. Mg(2+) is required as a cofactor. The N-terminus is blocked. In terms of tissue distribution, brain, liver, placenta, lymphocytes and erythrocytes.

Its subcellular location is the cytoplasm. It is found in the cell membrane. It carries out the reaction a catechol + S-adenosyl-L-methionine = a guaiacol + S-adenosyl-L-homocysteine + H(+). The enzyme catalyses 2-hydroxyestrone + S-adenosyl-L-methionine = 2-hydroxy-3-methoxy-estrone + S-adenosyl-L-homocysteine + H(+). It catalyses the reaction 4-hydroxyestrone + S-adenosyl-L-methionine = 4-methoxyestrone + S-adenosyl-L-homocysteine + H(+). The catalysed reaction is 2-hydroxyestrone + S-adenosyl-L-methionine = 2-methoxyestrone + S-adenosyl-L-homocysteine + H(+). It carries out the reaction 4-hydroxy-17beta-estradiol + S-adenosyl-L-methionine = 4-methoxy-17beta-estradiol + S-adenosyl-L-homocysteine + H(+). The enzyme catalyses 2-hydroxy-17beta-estradiol + S-adenosyl-L-methionine = 2-hydroxy-3-methoxy-17beta-estradiol + S-adenosyl-L-homocysteine + H(+). It catalyses the reaction 2-hydroxy-17beta-estradiol + S-adenosyl-L-methionine = 2-methoxy-17beta-estradiol + S-adenosyl-L-homocysteine + H(+). Functionally, catalyzes the O-methylation, and thereby the inactivation, of catecholamine neurotransmitters and catechol hormones. Also shortens the biological half-lives of certain neuroactive drugs, like L-DOPA, alpha-methyl DOPA and isoproterenol. The protein is Catechol O-methyltransferase of Homo sapiens (Human).